The primary structure comprises 307 residues: MSYFRTAILLAGLTGLFMGVGYLIGGAAGAMIALVVAAATNMFAYWNSDRMVLSMYGAHEVDAGTAPDLHRLVAELAARAALPMPRVFLMDNPQPNAFATGRNPENAAVAVTTGLMQSLRREELAGVIAHELAHIKHHDTLLMTITATIAGAISMLAQFGMFFGGGNRGNNGPGIIGSLAMMILAPLGAMLVQMAISRTREYAADEMGARICGQPMWLASALAKIDDAAHQVPNREAERAPATAHMFIINPLSGHGMDNLFATHPSTENRIAALQRLAGQSGSATPDPAPAPRGPWNGGAPRRGPWG.

Residues 16–36 traverse the membrane as a helical segment; sequence LFMGVGYLIGGAAGAMIALVV. H130 lines the Zn(2+) pocket. E131 is a catalytic residue. H134 is a Zn(2+) binding site. The next 2 membrane-spanning stretches (helical) occupy residues 145-165 and 172-192; these read ITAT…FFGG and GPGI…AMLV. E201 provides a ligand contact to Zn(2+). The disordered stretch occupies residues 278–307; it reads AGQSGSATPDPAPAPRGPWNGGAPRRGPWG.

Belongs to the peptidase M48B family. Zn(2+) is required as a cofactor.

It is found in the cell inner membrane. The chain is Protease HtpX homolog from Nitrobacter hamburgensis (strain DSM 10229 / NCIMB 13809 / X14).